A 1956-amino-acid chain; its full sequence is Sodium channel protein type 10 subunit alpha (1956 aa).

Residues 1–125 (MEFPIGSLET…FNLIRRTAIK (125 aa)) lie on the Cytoplasmic side of the membrane. The interval 27–54 (QIAAKQGTKKAREKHREQKDQEEKPRPQ) is disordered. Residues 40 to 54 (KHREQKDQEEKPRPQ) show a composition bias toward basic and acidic residues. Residues 116-405 (FNLIRRTAIK…VTMAYEEQNQ (290 aa)) form an I repeat. Residues 126–149 (VSVHSWFSLFITVTILVNCVCMTR) traverse the membrane as a helical segment. The Extracellular portion of the chain corresponds to 150–154 (TDLPE). A helical transmembrane segment spans residues 155–174 (KIEYVFTVIYTFEALIKILA). Over 175–187 (RGFCLNEFTYLRD) the chain is Cytoplasmic. Residues 188 to 206 (PWNWLDFSVITLAYVGTAI) traverse the membrane as a helical segment. At 207–212 (DLRGIS) the chain is on the extracellular side. Residues 213-232 (GLRTFRVLRALKTVSVIPGL) traverse the membrane as a helical; Voltage-sensor segment. Over 233 to 248 (KVIVGALIHSVKKLAD) the chain is Cytoplasmic. The chain crosses the membrane as a helical span at residues 249-272 (VTILTIFCLSVFALVGLQLFKGNL). Topologically, residues 273 to 341 (KNKCVKNDMA…PDFNYTSFDS (69 aa)) are extracellular. An intrachain disulfide couples Cys276 to Cys319. 4 N-linked (GlcNAc...) asparagine glycosylation sites follow: Asn284, Asn288, Asn312, and Asn335. An intramembrane region (pore-forming) is located at residues 342–366 (FAWAFLSLFRLMTQDSWERLYQQTL). Residues 367 to 373 (RTSGKIY) are Extracellular-facing. The chain crosses the membrane as a helical span at residues 374 to 399 (MIFFVLVIFLGSFYLVNLILAVVTMA). The Cytoplasmic portion of the chain corresponds to 400–659 (YEEQNQATTD…MWVKLKTILF (260 aa)). Phosphoserine occurs at positions 441, 444, 467, and 479. The segment covering 443-454 (HSHNGSPLTSKN) has biased composition (polar residues). 2 disordered regions span residues 443-485 (HSHN…YNQR) and 500-580 (SHGS…LAPG). Residues 561–570 (DSRHGEDEHQ) are compositionally biased toward basic and acidic residues. Residues Ser612 and Ser615 each carry the phosphoserine modification. Residues 647–911 (CCPMWVKLKT…EDDGEVNNLQ (265 aa)) form an II repeat. Residues 660-684 (GLVTDPFAELTITLCIVVNTIFMAM) traverse the membrane as a helical segment. The Extracellular segment spans residues 685–695 (EHHGMSPTFEA). A helical transmembrane segment spans residues 696-719 (MLQIGNIVFTIFFTAEMVFKIIAF). Over 720 to 727 (DPYYYFQK) the chain is Cytoplasmic. A helical transmembrane segment spans residues 728–747 (KWNIFDCIIVTVSLLELGVA). Over 748–753 (KKGSLS) the chain is Extracellular. A helical; Voltage-sensor transmembrane segment spans residues 754–773 (VLRSFRLLRVFKLAKSWPTL). The Cytoplasmic portion of the chain corresponds to 774–789 (NTLIKIIGNSVGALGN). The chain crosses the membrane as a helical span at residues 790 to 810 (LTIILAIIVFVFALVGKQLLG). Residues 811–834 (ENYRNNRKNISAPHEDWPRWHMHD) lie on the Extracellular side of the membrane. Asn819 is a glycosylation site (N-linked (GlcNAc...) asparagine). Positions 835 to 855 (FFHSFLIVFRILCGEWIENMW) form an intramembrane region, pore-forming. The Extracellular portion of the chain corresponds to 856–864 (ACMEVGQKS). Cysteines 857 and 866 form a disulfide. The helical transmembrane segment at 865–890 (ICLILFLTVMVLGNLVVLNLFIALLL) threads the bilayer. At 891-1147 (NSFSADNLTA…GWQVRKTCYR (257 aa)) the chain is on the cytoplasmic side. 2 disordered regions span residues 963 to 986 (AANT…EHSD) and 1041 to 1089 (DHLT…GSTV). Residues 1140–1449 (QVRKTCYRIV…KKYYNAMKKL (310 aa)) form an III repeat. A helical membrane pass occupies residues 1148–1171 (IVEHSWFESFIIFMILLSSGSLAF). The Extracellular portion of the chain corresponds to 1172-1184 (EDYYLDQKPTVKA). Residues 1185 to 1210 (LLEYTDRVFTFIFVFEMLLKWVAYGF) form a helical membrane-spanning segment. Residues 1211–1216 (KKYFTN) lie on the Cytoplasmic side of the membrane. A helical transmembrane segment spans residues 1217–1238 (AWCWLDFLIVNISLISLTAKIL). Topologically, residues 1239 to 1242 (EYSE) are extracellular. Residues 1243-1264 (VAPIKALRTLRALRPLRALSRF) traverse the membrane as a helical; Voltage-sensor segment. Over 1265–1283 (EGMRVVVDALVGAIPSIMN) the chain is Cytoplasmic. The chain crosses the membrane as a helical span at residues 1284–1311 (VLLVCLIFWLIFSIMGVNLFAGKFWRCI). N-linked (GlcNAc...) asparagine glycosylation is found at Asn1312, Asn1328, and Asn1336. Topologically, residues 1312–1353 (NYTDGEFSLVPLSIVNNKSDCKIQNSTGSFFWVNVKVNFDNV) are extracellular. Positions 1354-1375 (AMGYLALLQVATFKGWMDIMYA) form an intramembrane region, pore-forming. The Extracellular portion of the chain corresponds to 1376–1391 (AVDSREVNMQPKWEDN). A helical transmembrane segment spans residues 1392 to 1418 (VYMYLYFVIFIIFGGFFTLNLFVGVII). Residues 1419-1471 (DNFNQQKKKLGGQDIFMTEEQKKYYNAMKKLGSKKPQKPIPRPLNKFQGFVFD) are Cytoplasmic-facing. Ser1451 bears the Phosphoserine; by PKC mark. The IV repeat unit spans residues 1458–1757 (IPRPLNKFQG…WEKFDPEATQ (300 aa)). Residues 1472–1495 (IVTRQAFDITIMVLICLNMITMMV) form a helical membrane-spanning segment. The Extracellular segment spans residues 1496-1506 (ETDDQSEEKTK). Residues 1507 to 1530 (ILGKINQFFVAVFTGECVMKMFAL) form a helical membrane-spanning segment. The Cytoplasmic segment spans residues 1531–1536 (RQYYFT). A helical transmembrane segment spans residues 1537–1560 (NGWNVFDFIVVVLSIASLIFSAIL). At 1561-1572 (KSLQSYFSPTLF) the chain is on the extracellular side. A helical; Voltage-sensor membrane pass occupies residues 1573-1594 (RVIRLARIGRILRLIRAAKGIR). Residues 1595–1609 (TLLFALMMSLPALFN) lie on the Cytoplasmic side of the membrane. A helical transmembrane segment spans residues 1610-1632 (IGLLLFLVMFIYSIFGMSSFPHV). Over 1633-1646 (RWEAGIDDMFNFQT) the chain is Extracellular. The segment at residues 1647 to 1669 (FANSMLCLFQITTSAGWDGLLSP) is an intramembrane region (pore-forming). Topologically, residues 1670–1697 (ILNTGPPYCDPNLPNSNGTRGDCGSPAV) are extracellular. The N-linked (GlcNAc...) asparagine glycan is linked to Asn1686. A helical membrane pass occupies residues 1698 to 1722 (GIIFFTTYIIISFLIMVNMYIAVIL). Residues 1723 to 1956 (ENFNVATEES…TSMELIAPGP (234 aa)) lie on the Cytoplasmic side of the membrane. An IQ domain is found at 1851 to 1880 (EDISATVIQKAYRSYVLHRSMALSNTPCVP). The segment at 1909-1956 (SETASATSFPPSYESVTRGLSDRVNMRTSSSIQNEDEATSMELIAPGP) is disordered.

This sequence belongs to the sodium channel (TC 1.A.1.10) family. Nav1.8/SCN10A subfamily. In terms of assembly, the channel consists of an ion conducting pore forming alpha-subunit regulated by one or more associated auxiliary subunits SCN1B, SCN2B and SCN3B; electrophysiological properties may vary depending on the type of the associated beta subunits. Found in a number of complexes with PRX, DYNLT1 and PDZD2. Interacts with proteins such as FSTL1, PRX, DYNLT1, PDZD2, S100A10 and many others. Interacts with NEDD4 and NEDD4L. Post-translationally, ubiquitinated by NEDD4L; which promotes its endocytosis. In terms of processing, phosphorylation at Ser-1451 by PKC in a highly conserved cytoplasmic loop slows inactivation of the sodium channel and reduces peak sodium currents. Lacks the cysteine which covalently binds the conotoxin GVIIJ. This cysteine (position 816) is speculated in other sodium channel subunits alpha to be implied in covalent binding with the sodium channel subunit beta-2 or beta-4. As to expression, expressed in the dorsal root ganglia and sciatic nerve.

The protein resides in the cell membrane. The enzyme catalyses Na(+)(in) = Na(+)(out). Functionally, tetrodotoxin-resistant channel that mediates the voltage-dependent sodium ion permeability of excitable membranes. Assuming opened or closed conformations in response to the voltage difference across the membrane, the protein forms a sodium-selective channel through which sodium ions may pass in accordance with their electrochemical gradient. Plays a role in neuropathic pain mechanisms. The sequence is that of Sodium channel protein type 10 subunit alpha from Homo sapiens (Human).